We begin with the raw amino-acid sequence, 596 residues long: MATENGAVELGIQNPSTDKAPKGPTGERPLAAGKDPGPPDPKKAPDPPTLKKDAKAPASEKGDGTLAQPSTSSQGPKGEGDRGGGPAEGSAGPPAALPQQTATPETSVKKPKAEQGASGSQDPGKPRVGKKAAEGQAAARRGSPAFLHSPSCPAIISSSEKLLAKKPPSEASELTFEGVPMTHSPTDPRPAKAEEGKNILAESQKEVGEKTPGQAGQAKMQGDTSRGIEFQAVPSEKSEVGQALCLTAREEDCFQILDDCPPPPAPFPHRMVELRTGNVSSEFSMNSKEALGGGKFGAVCTCMEKATGLKLAAKVIKKQTPKDKEMVLLEIEVMNQLNHRNLIQLYAAIETPHEIVLFMEYIEGGELFERIVDEDYHLTEVDTMVFVRQICDGILFMHKMRVLHLDLKPENILCVNTTGHLVKIIDFGLARRYNPNEKLKVNFGTPEFLSPEVVNYDQISDKTDMWSMGVITYMLLSGLSPFLGDDDTETLNNVLSGNWYFDEETFEAVSDEAKDFVSNLIVKDQRARMNAAQCLAHPWLNNLAEKAKRCNRRLKSQILLKKYLMKRRWKKNFIAVSAANRFKKISSSGALMALGV.

Positions 1-224 (MATENGAVEL…AGQAKMQGDT (224 aa)) are disordered. Residue alanine 2 is modified to N-acetylalanine. A compositionally biased stretch (basic and acidic residues) spans 40 to 63 (DPKKAPDPPTLKKDAKAPASEKGD). A compositionally biased stretch (low complexity) spans 88–104 (EGSAGPPAALPQQTATP). A phosphoserine mark is found at serine 143, serine 149, and serine 151. A compositionally biased stretch (basic and acidic residues) spans 189–209 (RPAKAEEGKNILAESQKEVGE). The region spanning 285 to 540 (MNSKEALGGG…AAQCLAHPWL (256 aa)) is the Protein kinase domain. ATP is bound by residues 291–299 (LGGGKFGAV) and lysine 314. The active-site Proton acceptor is the aspartate 406. The residue at position 445 (threonine 445) is a Phosphothreonine. Positions 574-586 (IAVSAANRFKKIS) are calmodulin-binding.

The protein belongs to the protein kinase superfamily. CAMK Ser/Thr protein kinase family. As to quaternary structure, may interact with centrin. Heart and skeletal muscles. Increased expression in the apical tissue compared to the interventricular septal tissue.

It is found in the cytoplasm. It carries out the reaction L-seryl-[myosin light chain] + ATP = O-phospho-L-seryl-[myosin light chain] + ADP + H(+). It catalyses the reaction L-threonyl-[myosin light chain] + ATP = O-phospho-L-threonyl-[myosin light chain] + ADP + H(+). Functionally, implicated in the level of global muscle contraction and cardiac function. Phosphorylates a specific serine in the N-terminus of a myosin light chain. The sequence is that of Myosin light chain kinase 2, skeletal/cardiac muscle (MYLK2) from Homo sapiens (Human).